The following is a 356-amino-acid chain: Alanine racemase (356 aa).

The Proton acceptor; specific for D-alanine role is filled by Lys-34. The residue at position 34 (Lys-34) is an N6-(pyridoxal phosphate)lysine. Position 129 (Arg-129) interacts with substrate. Tyr-253 serves as the catalytic Proton acceptor; specific for L-alanine. Met-301 lines the substrate pocket.

Belongs to the alanine racemase family. Pyridoxal 5'-phosphate serves as cofactor.

It carries out the reaction L-alanine = D-alanine. The protein operates within amino-acid biosynthesis; D-alanine biosynthesis; D-alanine from L-alanine: step 1/1. In terms of biological role, catalyzes the interconversion of L-alanine and D-alanine. May also act on other amino acids. This Nitrosococcus oceani (strain ATCC 19707 / BCRC 17464 / JCM 30415 / NCIMB 11848 / C-107) protein is Alanine racemase (alr).